The following is a 136-amino-acid chain: Large ribosomal subunit protein uL16 (136 aa).

The protein belongs to the universal ribosomal protein uL16 family. As to quaternary structure, part of the 50S ribosomal subunit.

Functionally, binds 23S rRNA and is also seen to make contacts with the A and possibly P site tRNAs. This chain is Large ribosomal subunit protein uL16, found in Rickettsia peacockii (strain Rustic).